Reading from the N-terminus, the 146-residue chain is Stress-responsive DNAJB4-interacting membrane protein 1 (146 aa).

A signal peptide spans 1–26 (MWPAPCSVGRLLIFFMCSSSGYVVQG). The Extracellular portion of the chain corresponds to 27–66 (CGPSPGARTTLGSPLSLWSIKTPSHIFCTRRAINLGFPSP). The chain crosses the membrane as a helical span at residues 67 to 87 (PLVQLIFWSLNAGLDLYLCLI). Residues 88-94 (SSCGFSQ) are Cytoplasmic-facing. A helical transmembrane segment spans residues 95–115 (VFWPVEAFCSFSLSFFALALS). Topologically, residues 116–146 (HKFVICRLDQHIFSGFTKSLKNLPPCHRTDI) are extracellular.

In terms of assembly, homodimer. Interacts with DNAJB4. Expressed in brain with higher detection in neurons than astrocytes. Decreased expression in Alzheimer brains. Detected at protein level in brain and cervix.

The protein resides in the membrane. Functionally, promotes neuronal cells survival to stress conditions. The sequence is that of Stress-responsive DNAJB4-interacting membrane protein 1 (SDIM1) from Homo sapiens (Human).